The following is a 575-amino-acid chain: Alpha-(1,6)-fucosyltransferase (575 aa).

Residues 1–9 (MRPWTGSWR) lie on the Cytoplasmic side of the membrane. A helical; Signal-anchor for type II membrane protein transmembrane segment spans residues 10-30 (WIMLILFAWGTLLFYIGGHLV). At 31-575 (RDNDHPDHSS…KYPTYPEAEK (545 aa)) the chain is on the lumenal side. Disulfide bonds link C204-C266, C212-C230, and C218-C222. One can recognise a GT23 domain in the interval 206–493 (KAKKLVCNIN…PDASANFHSL (288 aa)). At S278 the chain carries Phosphoserine. Positions 299-305 (PRPPYLP) match the SH3-binding motif. Residues 365 to 366 (RR) are important for donor substrate binding. A disulfide bridge connects residues C465 and C472. The 62-residue stretch at 502–563 (QNAHNQIAIY…PSYKVREKIE (62 aa)) folds into the SH3 domain.

The protein belongs to the glycosyltransferase 23 family. Post-translationally, tyrosine phosphorylated by PKDCC/VLK.

It is found in the golgi apparatus. It localises to the golgi stack membrane. It carries out the reaction N(4)-{beta-D-GlcNAc-(1-&gt;2)-alpha-D-Man-(1-&gt;3)-[beta-D-GlcNAc-(1-&gt;2)-alpha-D-Man-(1-&gt;6)]-beta-D-Man-(1-&gt;4)-beta-D-GlcNAc-(1-&gt;4)-beta-D-GlcNAc}-L-asparaginyl-[protein] + GDP-beta-L-fucose = an N(4)-{beta-D-GlcNAc-(1-&gt;2)-alpha-D-Man-(1-&gt;3)-[beta-D-GlcNAc-(1-&gt;2)-alpha-D-Man-(1-&gt;6)]-beta-D-Man-(1-&gt;4)-beta-D-GlcNAc-(1-&gt;4)-[alpha-L-Fuc-(1-&gt;6)]-beta-D-GlcNAc}-L-asparaginyl-[protein] + GDP + H(+). Its pathway is protein modification; protein glycosylation. Its function is as follows. Catalyzes the addition of fucose in alpha 1-6 linkage to the first GlcNAc residue, next to the peptide chains in N-glycans. This chain is Alpha-(1,6)-fucosyltransferase (FUT8), found in Homo sapiens (Human).